Here is a 175-residue protein sequence, read N- to C-terminus: MSTIAKDQTQVNEKIRAKELRLIGQDGEQIGVKTKNEALEMAERVGLDVVIMAPNAKPPVARIMDYGKYKFEQQKKEKEMKKKQKTINLKEIRLSPTIEEHDFQTKLKNGRKFLEKGDKCKVSIRFRGRAITHKEIGQRVLEKFAEQCKDIATVEQRPKMDGRQMFIMLSPINEK.

Belongs to the IF-3 family. Monomer.

It localises to the cytoplasm. Its function is as follows. IF-3 binds to the 30S ribosomal subunit and shifts the equilibrium between 70S ribosomes and their 50S and 30S subunits in favor of the free subunits, thus enhancing the availability of 30S subunits on which protein synthesis initiation begins. This is Translation initiation factor IF-3 from Staphylococcus saprophyticus subsp. saprophyticus (strain ATCC 15305 / DSM 20229 / NCIMB 8711 / NCTC 7292 / S-41).